We begin with the raw amino-acid sequence, 626 residues long: MSQNQETRGFQSEVKQLLQLMIHSLYSNKEIFLRELISNASDAADKLRFKALSNPALYEGDGDLRVRVSFDADKGTITISDNGIGMTREQVIDHLGTIAKSGTKEFLTALGQDQAKNSQLIGQFGVGFYSAFIVADKVTVKTRAAGEEADKAVLWESAGEGEYSVADIEKKSRGTDVILHLREDEKEFLNEWRLREIIGKYSDHIGLPVEMLTKEYDDEGKECGEKWEKINKSDALWTRSKNDVSDEEYKAFYKHLSHDFVDPVTWAHNKVEGNQAYTSLLYVPAKAPWDLFNREHKHGLKLYVQRVFIMDDAEQFIPNYLRFMRGLIDSNDLPLNVSREILQDNKITAALRKALTKRSLQMLEKLAKDDAEKYLQFWKEFGLVLKEGPAEDFANKETVAKLLRFASTHNDGSEQTVSLEDYILRMKEGQKAIYYITADSYVAAKNSPHLELFNKKGIEVLLLSDRIDEWMLSYLTEFDGKQLQSITKADLDLGDLADKESETQKQQDEAFGSFIERVKNLLGERVKTVRLTHNLTDTPAVVSTDNDQMTTQMAKLFAAAGQPVPEVKYTFELNPEHHLVKKVADIADETEFADWVELLLEQAMLAERGSLENPAAFIKRINKLLG.

The tract at residues 1 to 339 is a; substrate-binding; that stretch reads MSQNQETRGF…SNDLPLNVSR (339 aa). The interval 340–555 is b; it reads EILQDNKITA…NDQMTTQMAK (216 aa). The c stretch occupies residues 556–626; the sequence is LFAAAGQPVP…FIKRINKLLG (71 aa).

This sequence belongs to the heat shock protein 90 family. In terms of assembly, homodimer.

It localises to the cytoplasm. Functionally, molecular chaperone. Has ATPase activity. The sequence is that of Chaperone protein HtpG from Haemophilus influenzae (strain ATCC 51907 / DSM 11121 / KW20 / Rd).